We begin with the raw amino-acid sequence, 352 residues long: Quinolinate synthase (352 aa).

Residues histidine 48 and serine 69 each coordinate iminosuccinate. Position 114 (cysteine 114) interacts with [4Fe-4S] cluster. Iminosuccinate-binding positions include tyrosine 140–asparagine 142 and serine 157. Cysteine 201 contributes to the [4Fe-4S] cluster binding site. Residues histidine 227 to glutamate 229 and threonine 244 contribute to the iminosuccinate site. Cysteine 298 provides a ligand contact to [4Fe-4S] cluster.

The protein belongs to the quinolinate synthase family. Type 1 subfamily. It depends on [4Fe-4S] cluster as a cofactor.

It localises to the cytoplasm. The catalysed reaction is iminosuccinate + dihydroxyacetone phosphate = quinolinate + phosphate + 2 H2O + H(+). The protein operates within cofactor biosynthesis; NAD(+) biosynthesis; quinolinate from iminoaspartate: step 1/1. Functionally, catalyzes the condensation of iminoaspartate with dihydroxyacetone phosphate to form quinolinate. The polypeptide is Quinolinate synthase (Pseudomonas syringae pv. tomato (strain ATCC BAA-871 / DC3000)).